We begin with the raw amino-acid sequence, 470 residues long: Leucine-rich repeat extensin-like protein 6 (470 aa).

The first 28 residues, 1–28 (MREDTFFFQWWFLVSGLSFIFLLPQAFT), serve as a signal peptide directing secretion. A glycan (N-linked (GlcNAc...) asparagine) is linked at Asn-83. LRR repeat units lie at residues 98 to 122 (VLTV…LGLL), 123 to 146 (TDLA…LKCL), 147 to 170 (HLLH…IFSL), 171 to 194 (PSLK…LFDL), 196 to 217 (LDAL…IGNS), 219 to 241 (VSVL…FYKM), 243 to 265 (KTLH…EIGL), 266 to 290 (LNQL…IGDM), 291 to 314 (KSLE…ICRL), and 316 to 337 (RLEN…CLRL). An N-linked (GlcNAc...) asparagine glycan is attached at Asn-319. A disordered region spans residues 378–411 (SPPPPPPPPPPPPPPPPPPPPPPPPPPPPPYVYP). Residues 378–470 (SPPPPPPPPP…CNDLPTPVHY (93 aa)) are contains the Ser-Pro(4) repeats.

In terms of processing, hydroxylated on proline residues in the S-P-P-P-P repeat. Post-translationally, O-glycosylated on hydroxyprolines. In terms of tissue distribution, expressed in roots.

It localises to the secreted. The protein resides in the cell wall. Modulates cell morphogenesis by regulating cell wall formation and assembly, and/or growth polarization. This chain is Leucine-rich repeat extensin-like protein 6 (LRX6), found in Arabidopsis thaliana (Mouse-ear cress).